The primary structure comprises 667 residues: DNA ligase (667 aa).

Residues 32–36, 81–82, and Glu110 contribute to the NAD(+) site; these read DSEYD and SL. The N6-AMP-lysine intermediate role is filled by Lys112. Arg133, Glu167, Lys283, and Lys307 together coordinate NAD(+). Zn(2+) contacts are provided by Cys401, Cys404, Cys419, and Cys424. The BRCT domain occupies 586 to 667; it reads EGHPEFSGKT…FVDKQNELNS (82 aa).

The protein belongs to the NAD-dependent DNA ligase family. LigA subfamily. The cofactor is Mg(2+). Mn(2+) serves as cofactor.

It carries out the reaction NAD(+) + (deoxyribonucleotide)n-3'-hydroxyl + 5'-phospho-(deoxyribonucleotide)m = (deoxyribonucleotide)n+m + AMP + beta-nicotinamide D-nucleotide.. DNA ligase that catalyzes the formation of phosphodiester linkages between 5'-phosphoryl and 3'-hydroxyl groups in double-stranded DNA using NAD as a coenzyme and as the energy source for the reaction. It is essential for DNA replication and repair of damaged DNA. The chain is DNA ligase from Staphylococcus aureus (strain bovine RF122 / ET3-1).